The primary structure comprises 291 residues: Kidney mitochondrial carrier protein 1 (291 aa).

Solcar repeat units lie at residues 7 to 96 (KPFI…LKRL), 104 to 189 (ETLV…TKKH), and 198 to 289 (DTVY…LKKL). Helical transmembrane passes span 9–26 (FIYG…TFPI), 71–89 (GIAP…KIGT), 106–124 (LVLN…SCIA), 164–183 (GVSL…LPVY), 204–224 (FLSS…VDVV), and 264–283 (GFWP…FITY).

Belongs to the mitochondrial carrier (TC 2.A.29) family.

Its subcellular location is the mitochondrion inner membrane. The catalysed reaction is sulfite(in) + sulfate(out) = sulfite(out) + sulfate(in). It catalyses the reaction thiosulfate(in) + sulfate(out) = thiosulfate(out) + sulfate(in). It carries out the reaction sulfate(out) + phosphate(in) = sulfate(in) + phosphate(out). The enzyme catalyses oxalate(in) + sulfate(out) = oxalate(out) + sulfate(in). The catalysed reaction is malonate(in) + sulfate(out) = malonate(out) + sulfate(in). It catalyses the reaction maleate(in) + sulfate(out) = maleate(out) + sulfate(in). It carries out the reaction (S)-malate(in) + sulfate(out) = (S)-malate(out) + sulfate(in). The enzyme catalyses (3S)-citramalate(in) + sulfate(out) = (3S)-citramalate(out) + sulfate(in). The catalysed reaction is (3R)-citramalate(in) + sulfate(out) = (3R)-citramalate(out) + sulfate(in). It catalyses the reaction sulfate(out) + succinate(in) = sulfate(in) + succinate(out). It carries out the reaction (S,S)-tartrate(in) + sulfate(out) = (S,S)-tartrate(out) + sulfate(in). The enzyme catalyses (2R,3R)-tartrate(in) + sulfate(out) = (2R,3R)-tartrate(out) + sulfate(in). The catalysed reaction is D-aspartate(in) + sulfate(out) = D-aspartate(out) + sulfate(in). It catalyses the reaction L-aspartate(in) + sulfate(out) = L-aspartate(out) + sulfate(in). It carries out the reaction sulfate(in) = sulfate(out). The enzyme catalyses phosphate(in) = phosphate(out). The catalysed reaction is (S)-malate(out) = (S)-malate(in). Functionally, probable transporter. In terms of biological role, antiporter that transports inorganic anions (sulfate, sulfite, thiosulfate and phosphate) and, to a lesser extent, a variety of dicarboxylates (e.g. malonate, malate and citramalate) and, even more so, aspartate. The sulfate/sulfate exchange is much higher than the phosphate/phosphate and malate/malate exchanges. The transport affinities is higher for sulfate and thiosulfate than for any other substrate. May catalyze the export of sulfite and thiosulfate (the hydrogen sulfide degradation products) from the mitochondria, thereby modulating the level of the hydrogen sulfide. Also may mediate a very low unidirectional transport of sulfate, phosphate and (S)-malate. This Xenopus laevis (African clawed frog) protein is Kidney mitochondrial carrier protein 1.